The primary structure comprises 423 residues: Glutamyl-tRNA reductase (423 aa).

Residues 51–54 (TCNR), Ser99, 104–106 (EDQ), and Gln110 each bind substrate. Cys52 (nucleophile) is an active-site residue. NADP(+) is bound at residue 179–184 (GSGEMG).

Belongs to the glutamyl-tRNA reductase family. In terms of assembly, homodimer.

The enzyme catalyses (S)-4-amino-5-oxopentanoate + tRNA(Glu) + NADP(+) = L-glutamyl-tRNA(Glu) + NADPH + H(+). It participates in porphyrin-containing compound metabolism; protoporphyrin-IX biosynthesis; 5-aminolevulinate from L-glutamyl-tRNA(Glu): step 1/2. Its function is as follows. Catalyzes the NADPH-dependent reduction of glutamyl-tRNA(Glu) to glutamate 1-semialdehyde (GSA). The chain is Glutamyl-tRNA reductase from Methanoculleus marisnigri (strain ATCC 35101 / DSM 1498 / JR1).